A 445-amino-acid chain; its full sequence is 3-phosphoshikimate 1-carboxyvinyltransferase (445 aa).

The segment at 1 to 25 (MTDSNQPTPLQARKSGALHGTARVP) is disordered. 3-phosphoshikimate-binding residues include K28, S29, and R33. K28 lines the phosphoenolpyruvate pocket. G101 and R129 together coordinate phosphoenolpyruvate. Residues S175, Q177, D328, and K355 each contribute to the 3-phosphoshikimate site. A phosphoenolpyruvate-binding site is contributed by Q177. Residue D328 is the Proton acceptor of the active site. R359 and R402 together coordinate phosphoenolpyruvate.

This sequence belongs to the EPSP synthase family. Monomer.

It localises to the cytoplasm. The catalysed reaction is 3-phosphoshikimate + phosphoenolpyruvate = 5-O-(1-carboxyvinyl)-3-phosphoshikimate + phosphate. Its pathway is metabolic intermediate biosynthesis; chorismate biosynthesis; chorismate from D-erythrose 4-phosphate and phosphoenolpyruvate: step 6/7. In terms of biological role, catalyzes the transfer of the enolpyruvyl moiety of phosphoenolpyruvate (PEP) to the 5-hydroxyl of shikimate-3-phosphate (S3P) to produce enolpyruvyl shikimate-3-phosphate and inorganic phosphate. This is 3-phosphoshikimate 1-carboxyvinyltransferase from Rhodopseudomonas palustris (strain TIE-1).